Reading from the N-terminus, the 216-residue chain is Maintenance of carboxysome distribution protein A (216 aa).

Gly-16, Gly-17, Gly-19, Lys-20, Thr-21, Thr-22, and Gln-45 together coordinate ATP. Thr-21 is a Mg(2+) binding site.

The protein belongs to the ParA family. McdA subfamily. In terms of assembly, self-associates, associates with McdB.

Its subcellular location is the cytoplasm. The protein resides in the nucleoid. The catalysed reaction is ATP + H2O = ADP + phosphate + H(+). Functionally, mcdA and McdB together mediate carboxysome positioning on the nucleoid and prevent their aggregation in the cell. McdA is an ATPase that forms dynamic gradients on the nucleoid in response to adapter protein McdB, which associates with carboxysomes. The interplay between McdA gradients on the nucleoid and McdB-bound carboxysomes result in the equal spacing of Cbs along the cell length. Its function is as follows. Incorrect positioning (aggregation) of carboxysomes results in reduced CO(2) fixation by encapsulated form 1 ribulose-1,5-bisphosphate carboxylase (RuBisCO, cbbL/cbbS), which leads to slower growth. The chain is Maintenance of carboxysome distribution protein A from Halothiobacillus neapolitanus (strain ATCC 23641 / c2) (Thiobacillus neapolitanus).